The primary structure comprises 194 residues: uncharacterized protein (194 aa).

The first 24 residues, methionine 1–glycine 24, serve as a signal peptide directing secretion.

This is an uncharacterized protein from Archaeoglobus fulgidus (strain ATCC 49558 / DSM 4304 / JCM 9628 / NBRC 100126 / VC-16).